The chain runs to 117 residues: Large ribosomal subunit protein uL18 (117 aa).

The protein belongs to the universal ribosomal protein uL18 family. As to quaternary structure, part of the 50S ribosomal subunit; part of the 5S rRNA/L5/L18/L25 subcomplex. Contacts the 5S and 23S rRNAs.

Functionally, this is one of the proteins that bind and probably mediate the attachment of the 5S RNA into the large ribosomal subunit, where it forms part of the central protuberance. The protein is Large ribosomal subunit protein uL18 of Serratia proteamaculans (strain 568).